Reading from the N-terminus, the 457-residue chain is Aromatic amino acid transport protein AroP (457 aa).

Residues 1-20 (MMDSQQHGEQLKRGLKNRHI) are Cytoplasmic-facing. Residues 21–41 (QLIALGGAIGTGLFLGSASVI) form a helical membrane-spanning segment. Residue glutamine 42 is a topological domain, periplasmic. Residues 43–63 (SAGPGIILGYAIAGFIAFLIM) form a helical membrane-spanning segment. The Cytoplasmic portion of the chain corresponds to 64 to 86 (RQLGEMVVEEPVAGSFSHFAYKY). Residues 87–107 (WGGFAGFASGWNYWVLYVLVA) traverse the membrane as a helical segment. Topologically, residues 108-117 (MAELTAVGKY) are periplasmic. Residues 118–138 (IQFWYPEIPTWASAAAFFVII) traverse the membrane as a helical segment. Residues 139–155 (NAINLTNVKVFGEMEFW) are Cytoplasmic-facing. The helical transmembrane segment at 156-176 (FAIIKVIAVIAMILFGAWLLF) threads the bilayer. Residues 177–201 (SDTAGPQATVRNLWEQGGFLPHGWT) lie on the Periplasmic side of the membrane. The chain crosses the membrane as a helical span at residues 202–222 (GLVMMMAIIMFSFGGLELVGI). Residues 223–240 (TAAEADNPEQSIPKATNQ) are Cytoplasmic-facing. Residues 241–261 (VIYRILIFYIGSLAVLLSLLP) traverse the membrane as a helical segment. The Periplasmic segment spans residues 262 to 271 (WTRVTADTSP). A helical transmembrane segment spans residues 272-292 (FVLIFHELGDTFVANALNIVV). Residues 293–333 (LTAALSVYNSCVYCNSRMLFGLAQQGNAPKALLNVDKRGVP) lie on the Cytoplasmic side of the membrane. A helical membrane pass occupies residues 334 to 354 (VSSILVSAVVTALCVLLNYLA). The Periplasmic segment spans residues 355–358 (PESA). A helical membrane pass occupies residues 359-379 (FGLLMALVVSALVINWAMISL). Topologically, residues 380-400 (AHMMFRRAKQQQGVKTRFPAL) are cytoplasmic. Residues 401 to 421 (FYPFGNVLCLLFMAAVLIIML) traverse the membrane as a helical segment. Topologically, residues 422 to 425 (MTPG) are periplasmic. A helical membrane pass occupies residues 426 to 446 (MAISVWLIPVWLLILGVGYLC). Residues 447-457 (KEKTAKTVKAH) are Cytoplasmic-facing.

The protein belongs to the amino acid-polyamine-organocation (APC) superfamily. Amino acid transporter (AAT) (TC 2.A.3.1) family.

Its subcellular location is the cell inner membrane. It catalyses the reaction L-phenylalanine(in) + H(+)(in) = L-phenylalanine(out) + H(+)(out). The enzyme catalyses L-tryptophan(in) + H(+)(in) = L-tryptophan(out) + H(+)(out). The catalysed reaction is L-tyrosine(in) + H(+)(in) = L-tyrosine(out) + H(+)(out). Functionally, permease that is involved in the active transport across the cytoplasmic membrane of all three aromatic amino acids, phenylalanine, tyrosine and tryptophan. This is Aromatic amino acid transport protein AroP (aroP) from Salmonella typhi.